Reading from the N-terminus, the 131-residue chain is Small ribosomal subunit protein uS8 (131 aa).

This sequence belongs to the universal ribosomal protein uS8 family. Part of the 30S ribosomal subunit. Contacts proteins S5 and S12.

In terms of biological role, one of the primary rRNA binding proteins, it binds directly to 16S rRNA central domain where it helps coordinate assembly of the platform of the 30S subunit. This chain is Small ribosomal subunit protein uS8, found in Campylobacter hominis (strain ATCC BAA-381 / DSM 21671 / CCUG 45161 / LMG 19568 / NCTC 13146 / CH001A).